The sequence spans 471 residues: UDP-glycosyltransferase 1 (471 aa).

The Proton acceptor role is filled by His15. Position 15 (His15) interacts with an anthocyanidin. The Charge relay role is filled by Asp124. The UDP-alpha-D-glucose site is built by Thr146, Ala348, Gln350, His365, Trp368, Asn369, Ser370, and Glu373. Ala388 is a binding site for an anthocyanidin. Residues Glu389 and Gln390 each contribute to the UDP-alpha-D-glucose site.

Belongs to the UDP-glycosyltransferase family. Expressed in roots. Detected in stems and leaves.

It carries out the reaction a 7-hydroxyisoflavone + UDP-alpha-D-glucose = a 7-hydroxyisoflavone 7-O-beta-D-glucoside + UDP + H(+). In terms of biological role, isoflavone 7-O-glucosyltransferase converting daidzein to daidzin, genistein to genistin and formononetin to ononin. Shows some activity toward the chalcone isoliquiritigenin, the flavanones liquiritigenin and naringenin, and the flavone apigenin, but not toward cyanidin, luteolin, kaempferol, quercetin, daidzin and puerarin. This chain is UDP-glycosyltransferase 1, found in Pueraria montana var. lobata (Kudzu vine).